We begin with the raw amino-acid sequence, 773 residues long: Subtilisin-like protease SBT3.4 (773 aa).

The signal sequence occupies residues 1-23 (MRNFRSSVLVVLSLIIVLNVARA). Residues 24–108 (SAKSKVHIVY…VIPDSYYELA (85 aa)) constitute a propeptide, activation peptide. Positions 29–108 (VHIVYLGEKQ…VIPDSYYELA (80 aa)) constitute an Inhibitor I9 domain. Residues 112–620 (IWDYLGPSAD…GGLVNPEKAA (509 aa)) enclose the Peptidase S8 domain. The Charge relay system role is filled by Asp-142. The N-linked (GlcNAc...) asparagine glycan is linked to Asn-200. The Charge relay system role is filled by His-216. 3 N-linked (GlcNAc...) asparagine glycosylation sites follow: Asn-231, Asn-408, and Asn-536. Residues 382 to 474 (SLVYPEDPGN…IDNELGTDIL (93 aa)) enclose the PA domain. The active-site Charge relay system is the Ser-551. N-linked (GlcNAc...) asparagine glycosylation is present at Asn-643.

Belongs to the peptidase S8 family.

The protein resides in the secreted. The protein is Subtilisin-like protease SBT3.4 of Arabidopsis thaliana (Mouse-ear cress).